Reading from the N-terminus, the 44-residue chain is Thymosin beta-10 (44 aa).

The protein belongs to the thymosin beta family.

It is found in the cytoplasm. The protein resides in the cytoskeleton. Functionally, plays an important role in the organization of the cytoskeleton. Binds to and sequesters actin monomers (G actin) and therefore inhibits actin polymerization. The sequence is that of Thymosin beta-10 from Torpedo marmorata (Marbled electric ray).